The chain runs to 322 residues: Breast cancer metastasis-suppressor 1-like protein (322 aa).

Residues 1 to 16 (MPVHSREKKESNHNDM) are compositionally biased toward basic and acidic residues. The interval 1 to 56 (MPVHSREKKESNHNDMEVDYPENEGTSSEEDDSDSSSGSEEGDSSEMDDEDCERRR) is disordered. Acidic residues predominate over residues 17–51 (EVDYPENEGTSSEEDDSDSSSGSEEGDSSEMDDED). Coiled-coil stretches lie at residues 50 to 82 (EDCE…KERL) and 147 to 178 (EKLL…ITSE).

The protein belongs to the BRMS1 family.

It localises to the nucleus. Functionally, involved in the histone deacetylase (HDAC1)-dependent transcriptional repression activity. The polypeptide is Breast cancer metastasis-suppressor 1-like protein (brms1l) (Xenopus tropicalis (Western clawed frog)).